The primary structure comprises 23 residues: Cytochrome c oxidase subunit 7A1, mitochondrial (23 aa).

It belongs to the cytochrome c oxidase VIIa family. As to quaternary structure, component of the complex IV (CIV, cytochrome c oxidase), a multisubunit enzyme composed of 14 subunits. The complex is composed of a catalytic core of 3 subunits MT-CO1, MT-CO2 and MT-CO3, encoded in the mitochondrial DNA, and 11 supernumerary subunits COX4I1 (or COX4I2), COX5A, COX5B, COX6A2 (or COX6A1), COX6B1 (or COX6B2), COX6C, COX7A1 (or COX7A2), COX7B, COX7C, COX8B and NDUFA4, which are encoded in the nuclear genome. The complex exists as a monomer or a dimer and forms supercomplexes (SCs) in the inner mitochondrial membrane with NADH-ubiquinone oxidoreductase (complex I, CI) and ubiquinol-cytochrome c oxidoreductase (cytochrome b-c1 complex, complex III, CIII), resulting in different assemblies (supercomplex SCI(1)III(2)IV(1) and megacomplex MCI(2)III(2)IV(2)).

It is found in the mitochondrion inner membrane. It functions in the pathway energy metabolism; oxidative phosphorylation. Its function is as follows. Component of the mitochondrial respiratory complex IV (CIV, also named cytochrome c oxidase complex), the last enzyme in the mitochondrial electron transport chain which drives oxidative phosphorylation. The CIV complex is the component of the respiratory chain that catalyzes the reduction of oxygen to water. Acts as an assembly factor that specifically drives the homodimerization of CIV complexes, mediating the formation of mitochondrial respiratory supercomplexes (respirasomes) containing two CIV: supercomplxes with two molecules of CIV show improved activity. Despite being highly expressed in brown adipose tissue, not required for thermogenesis. This Canis lupus familiaris (Dog) protein is Cytochrome c oxidase subunit 7A1, mitochondrial (COX7A1).